Consider the following 122-residue polypeptide: UPF0145 protein TV0671 (122 aa).

This sequence belongs to the UPF0145 family.

This is UPF0145 protein TV0671 from Thermoplasma volcanium (strain ATCC 51530 / DSM 4299 / JCM 9571 / NBRC 15438 / GSS1).